A 231-amino-acid chain; its full sequence is MTDTLMNADPPRRIRSFVLRQGRITASQKNALENLWPRYGLDPAAAFDPAAVFGRRAPLTLEIGFGNGESLAAMAQSLPAEDFIGAEVHPPGIGHLLIELERRGLDNVRVFRVDAVELLENCIPEGALARILVFFPDPWHKQRHKKRRLVSPAFARLAASRLAPGGVFHAATDWEDYAMQMLEVLNGCETLVNQAPDGRFSERPAYRTPTKFEQRGQRLGHGVWDLVYRRS.

Residues E62, E87, D114, and D137 each contribute to the S-adenosyl-L-methionine site. The active site involves D137. Substrate contacts are provided by residues K141, D173, and 210–213; that span reads TKFE.

Belongs to the class I-like SAM-binding methyltransferase superfamily. TrmB family.

The catalysed reaction is guanosine(46) in tRNA + S-adenosyl-L-methionine = N(7)-methylguanosine(46) in tRNA + S-adenosyl-L-homocysteine. Its pathway is tRNA modification; N(7)-methylguanine-tRNA biosynthesis. Its function is as follows. Catalyzes the formation of N(7)-methylguanine at position 46 (m7G46) in tRNA. This chain is tRNA (guanine-N(7)-)-methyltransferase, found in Methylococcus capsulatus (strain ATCC 33009 / NCIMB 11132 / Bath).